We begin with the raw amino-acid sequence, 639 residues long: Extracellular metalloproteinase mep (639 aa).

A signal peptide spans 1–16 (MHMLSFIGALALPVFV). A propeptide spanning residues 17–245 (CAQSCEPASL…IHGVVDYISE (229 aa)) is cleaved from the precursor. N-linked (GlcNAc...) asparagine glycosylation is found at asparagine 287, asparagine 320, asparagine 336, and asparagine 368. Position 429 (histidine 429) interacts with Zn(2+). The active site involves glutamate 430. Histidine 433 is a Zn(2+) binding site. N-linked (GlcNAc...) asparagine glycosylation is present at asparagine 509.

It belongs to the peptidase M36 family. The cofactor is Zn(2+).

It is found in the secreted. Secreted metalloproteinase that allows assimilation of proteinaceous substrates. The protein is Extracellular metalloproteinase mep (mep) of Aspergillus flavus (strain ATCC 200026 / FGSC A1120 / IAM 13836 / NRRL 3357 / JCM 12722 / SRRC 167).